Consider the following 143-residue polypeptide: Glycine cleavage system H protein 1 (143 aa).

The 82-residue stretch at 26–107 folds into the Lipoyl-binding domain; it reads IYSVGMASIL…PYSSWIAKLK (82 aa). The residue at position 67 (lysine 67) is an N6-lipoyllysine.

This sequence belongs to the GcvH family. In terms of assembly, the glycine cleavage system is composed of four proteins: P, T, L and H. The cofactor is (R)-lipoate.

The glycine cleavage system catalyzes the degradation of glycine. The H protein shuttles the methylamine group of glycine from the P protein to the T protein. This chain is Glycine cleavage system H protein 1, found in Aquifex aeolicus (strain VF5).